A 193-amino-acid polypeptide reads, in one-letter code: Ion-translocating oxidoreductase complex subunit A (193 aa).

Transmembrane regions (helical) follow at residues 4–24 (FLLV…KFLG), 39–59 (IGMG…CWLV), 71–91 (FLRI…IETV), 102–122 (ALGI…LPLM), 134–154 (TLSG…FAGM), and 171–191 (PIAF…AGLV).

It belongs to the NqrDE/RnfAE family. In terms of assembly, the complex is composed of six subunits: RnfA, RnfB, RnfC, RnfD, RnfE and RnfG.

It is found in the cellular chromatophore membrane. Part of a membrane-bound complex that couples electron transfer with translocation of ions across the membrane. Required for nitrogen fixation. Involved in electron transfer to nitrogenase. This is Ion-translocating oxidoreductase complex subunit A from Rhodobacter capsulatus (Rhodopseudomonas capsulata).